The sequence spans 330 residues: 3'-5' exonuclease (330 aa).

Residues 1–92 (MDQYLIKMST…DGTPSPEKEI (92 aa)) form a disordered region. Composition is skewed to basic and acidic residues over residues 27 to 39 (NTTR…KEKI) and 48 to 66 (KDTP…ENPP). 2 positions are modified to phosphoserine: Ser79 and Ser87. Residues 117–289 (SADEVMQWVE…IGQVIYRDIE (173 aa)) form the 3'-5' exonuclease domain. Mg(2+) is bound by residues Asp139, Glu141, and Asp277.

Belongs to the WRNexo family.

It localises to the nucleus. Functionally, has exonuclease activity on both single-stranded and duplex templates bearing overhangs, but not blunt ended duplex DNA, and cleaves in a 3'-5' direction. Essential for the formation of DNA replication focal centers. Has an important role in maintaining genome stability. This Drosophila virilis (Fruit fly) protein is 3'-5' exonuclease.